Consider the following 137-residue polypeptide: QELLDVDGEILRNGGSYYILPAFRGKGGGLELAKTEGETCPLTVVQARSETDRGLPASIWSPPRIAIIRPGFSLNIEFRPRNPSACHRESSLQWKVEEESQQVKIAVKEDARGFGPFRIRPHRDDYKLVYCDEGQKR.

Cys-40 and Cys-86 are disulfide-bonded.

This sequence belongs to the protease inhibitor I3 (leguminous Kunitz-type inhibitor) family. In terms of assembly, heterodimer of an alpha and a beta chain linked by a disulfide bond.

Functionally, inhibition of trypsin. The protein is Kunitz-type trypsin inhibitor alpha chain of Neltuma juliflora (Mesquite).